The sequence spans 231 residues: Phosphoribosylformylglycinamidine synthase subunit PurQ (231 aa).

Positions 3 to 231 (FGVLIFPGSN…ESMVGAMAKR (229 aa)) constitute a Glutamine amidotransferase type-1 domain. The active-site Nucleophile is the Cys-86. Active-site residues include His-203 and Glu-205.

In terms of assembly, part of the FGAM synthase complex composed of 1 PurL, 1 PurQ and 2 PurS subunits.

The protein resides in the cytoplasm. It carries out the reaction N(2)-formyl-N(1)-(5-phospho-beta-D-ribosyl)glycinamide + L-glutamine + ATP + H2O = 2-formamido-N(1)-(5-O-phospho-beta-D-ribosyl)acetamidine + L-glutamate + ADP + phosphate + H(+). It catalyses the reaction L-glutamine + H2O = L-glutamate + NH4(+). It functions in the pathway purine metabolism; IMP biosynthesis via de novo pathway; 5-amino-1-(5-phospho-D-ribosyl)imidazole from N(2)-formyl-N(1)-(5-phospho-D-ribosyl)glycinamide: step 1/2. Its function is as follows. Part of the phosphoribosylformylglycinamidine synthase complex involved in the purines biosynthetic pathway. Catalyzes the ATP-dependent conversion of formylglycinamide ribonucleotide (FGAR) and glutamine to yield formylglycinamidine ribonucleotide (FGAM) and glutamate. The FGAM synthase complex is composed of three subunits. PurQ produces an ammonia molecule by converting glutamine to glutamate. PurL transfers the ammonia molecule to FGAR to form FGAM in an ATP-dependent manner. PurS interacts with PurQ and PurL and is thought to assist in the transfer of the ammonia molecule from PurQ to PurL. This Koribacter versatilis (strain Ellin345) protein is Phosphoribosylformylglycinamidine synthase subunit PurQ.